Here is a 498-residue protein sequence, read N- to C-terminus: MASQGTKRSYEQMETDGERQNATEIRASVGKMIDGIGRFYIQMCTELKLSDYEGRLIQNSLTIERMVLSAFDERRNRYLEEHPSAGKDPKKTGGPIYKRVDRKWMRELILYDKEEIRRIWRQANNGDDATAGLTHMMIWHSNLNDTTYQRTRALVRTGMDPRMCSLMQGSTLPRRSGAAGAAVKGVGTMVMELIRMIKRGINDRNFWRGENGRKTRSAYERMCNILKGKFQTAAQRAMMDQVRESRNPGNAEIEDLIFLARSALILRGSVAHKSCLPACVYGPAVASGYDFEKEGYSLVGIDPFKLLQNSQVYSLIRPNENPAHKSQLVWMACHSAAFEDLRLLSFIRGTKVSPRGKLSTRGVQIASNENMDTMESSTLELRSRYWAIRTRSGGNTNQQRASAGQISVQPTFSVQRNLPFDKSTVMAAFTGNTEGRTSDMRAEIIRMMEDAKPEEVSFRGRGVFELSDEKATNPIVPSFDMSNEGSYFFGDNAEEYDN.

The Unconventional nuclear localization signal signature appears at 1–18; sequence MASQGTKRSYEQMETDGE. Residues 1–21 are disordered; that stretch reads MASQGTKRSYEQMETDGERQN. Residues 8-21 show a composition bias toward basic and acidic residues; it reads RSYEQMETDGERQN. The Bipartite nuclear localization signal signature appears at 198-216; it reads KRGINDRNFWRGENGRKTR.

This sequence belongs to the influenza viruses nucleoprotein family. As to quaternary structure, homomultimerizes to form the nucleocapsid. May bind host exportin-1/XPO1. Binds to viral genomic RNA. Protein-RNA contacts are mediated by a combination of electrostatic interactions between positively charged residues and the phosphate backbone and planar interactions between aromatic side chains and bases. Post-translationally, late in virus-infected cells, may be cleaved from a 56-kDa protein to a 53-kDa protein by a cellular caspase. This cleavage might be a marker for the onset of apoptosis in infected cells or have a specific function in virus host interaction.

The protein localises to the virion. Its subcellular location is the host nucleus. Its function is as follows. Encapsidates the negative strand viral RNA, protecting it from nucleases. The encapsidated genomic RNA is termed the ribonucleoprotein (RNP) and serves as template for transcription and replication. The RNP needs to be localized in the host nucleus to start an infectious cycle, but is too large to diffuse through the nuclear pore complex. NP comprises at least 2 nuclear localization signals that are responsible for the active RNP import into the nucleus through cellular importin alpha/beta pathway. Later in the infection, nclear export of RNPs are mediated through viral proteins NEP interacting with M1 which binds nucleoproteins. It is possible that nucleoprotein binds directly host exportin-1/XPO1 and plays an active role in RNPs nuclear export. M1 interaction with RNP seems to hide nucleoprotein's nuclear localization signals. Soon after a virion infects a new cell, M1 dissociates from the RNP under acidification of the virion driven by M2 protein. Dissociation of M1 from RNP unmasks nucleoprotein's nuclear localization signals, targeting the RNP to the nucleus. The chain is Nucleoprotein from Influenza A virus (strain A/Kiev/59/1979 H1N1).